The sequence spans 632 residues: Threonine--tRNA ligase (632 aa).

The region spanning 1-59 (MIRITFLAKQKVEEYSSRVTGFDILQPDISKEAIALRVNGELYDLSREIESDTEIDVIQ) is the TGS domain. Residues 240–532 (DHRRIAKDMD…LIEHYAGKFP (293 aa)) are catalytic. Zn(2+) is bound by residues cysteine 332, histidine 383, and histidine 509.

This sequence belongs to the class-II aminoacyl-tRNA synthetase family. As to quaternary structure, homodimer. Zn(2+) is required as a cofactor.

It localises to the cytoplasm. The catalysed reaction is tRNA(Thr) + L-threonine + ATP = L-threonyl-tRNA(Thr) + AMP + diphosphate + H(+). In terms of biological role, catalyzes the attachment of threonine to tRNA(Thr) in a two-step reaction: L-threonine is first activated by ATP to form Thr-AMP and then transferred to the acceptor end of tRNA(Thr). Also edits incorrectly charged L-seryl-tRNA(Thr). In Wolbachia sp. subsp. Brugia malayi (strain TRS), this protein is Threonine--tRNA ligase.